Reading from the N-terminus, the 408-residue chain is MQPFHTLSRILPFPDATQKAWWDKLAPMLLKAMQAQGYDTEAQYAQLGMVYKCVLPYLGQYPTVENDATRWKSFLCPYGIPIEPSLNISQGILRYAFEPIGPDVGTDKDPQNMNVIQDCLKGLTDHDDRIDTTLYAQFASRLLLTKEESQRVAATGQFTFKPGQGMHGYAVDMKGSQPMVKGYFCVGIKSAVTGIPTGKLMLDAVREVDTEGRITEPLDKLEDYYGNALGNLRLCFMSVDMIDPQDARTKLYGLQQEVSFEGLEDLWTLGGRINTPTNQEGLQLLRELWDLLQIPPGVRDIEVDHCSVGQPPKYLLPSLVNWTFLPGHSDPMPQVYLVPFGLPDAHISDALVTFFERRGWTDLARSYKSNLASYFPDVDFSQSRHVQEAISFSFRKGKPYLSVYMSLF.

Positions 94, 181, 183, 248, 250, 252, 334, 336, 400, and 404 each coordinate dimethylallyl diphosphate.

This sequence belongs to the tryptophan dimethylallyltransferase family. As to quaternary structure, homodimer.

It carries out the reaction preechinulin + dimethylallyl diphosphate = tardioxopiperazine B + diphosphate. The catalysed reaction is preechinulin + dimethylallyl diphosphate = tardioxopiperazine A + diphosphate. It catalyses the reaction tardioxopiperazine A + dimethylallyl diphosphate = echinulin + diphosphate. The enzyme catalyses tardioxopiperazine A + dimethylallyl diphosphate = variecolorin L + diphosphate. It carries out the reaction neoechinulin A + dimethylallyl diphosphate = variecolorin G + diphosphate. The catalysed reaction is neoechinulin A + dimethylallyl diphosphate = isoechinulin A + diphosphate. It catalyses the reaction isoechinulin A + dimethylallyl diphosphate = dehydroechinulin + diphosphate. The enzyme catalyses neoechinulin B + dimethylallyl diphosphate = isoechinulin B + diphosphate. It functions in the pathway secondary metabolite biosynthesis. It participates in alkaloid biosynthesis. Its function is as follows. Prenyltransferase; part of the gene cluster that mediates the biosynthesis of echinulin family alkaloid. The pathway begins with the biosynthesis of the cyclic dipeptide cyclo-L-Trp-L-Ala (cyclo-TA) by the NRPS criC via condensation of L-alanine and L-tryptophan. The prenyltransferase criA then catalyzes the first prenylation step, a reverse prenylation reaction at C2, to yield preechinulin. Preechinulin is the substrate of the cytochrome P450 monooxygenase criE that catalyzes the formation of the double bond between C10 and C11 to produce neoechulin A. The unique prenyltransferase criF functions as a competitive enzyme with criE for preechinulin metabolization and uses preechinulin for effective regiospecific prenylations. Preechinulin is prenylated by criF at C5 or C7. C7-prenylation leads to accumulation of tardioxopiperazine B without further modification by criF. In contrast, the C5-prenylated tardioxopiperazine A can be prenylated again by criF, predominantly at C7 to form echinulin or less frequently at C4 to give variecolorin L. CriF also accepts neoechilunin A to produce varlecolorin G (prenylation at C5) or isoechinulin A (prenylation at C7). CriF further converts isoechinulin A into dehydroechinulin. Moreover, a yet unidentified enzyme can also convert neoechilunin A into neoechilunin B by introducing a double bond between positions C14 and C17 and thus provides a further substrate to criF for C5 and C7 prenylation. This Aspergillus cristatus (Chinese Fuzhuan brick tea-fermentation fungus) protein is Prenyltransferase criF.